The sequence spans 538 residues: NAD(P)H-quinone oxidoreductase chain 4 (538 aa).

A run of 14 helical transmembrane segments spans residues 11–31, 43–63, 95–115, 119–139, 143–163, 175–195, 217–237, 251–271, 285–305, 314–334, 340–360, 382–404, 425–445, and 472–492; these read FPWLSLSILFPIVGALIVPFI, YALIISLITFLITVAAYFKGF, MPLILLTSFITSLAVLAAWPV, PKLFFFLILAMDGGQIAVFAV, LLFFLAWELELFPVYLFLAIW, FIIYTAGSSLFILLAGLAMGF, GFQLLCYSGLLIAFGVKLPIV, TAPVHMLLAGILLKMGGYALL, FAPLLIVLGVVNIIYAALTSF, IAYSSISHMGFVLIGIGSFSS, AMLQMVSHGLIGASLFFLVGA, IMFALWTACAFASLALPGMSGFI, IVVASLAAIGVILTPIYLLSM, and IYIIACLLVPIIGIGLYPKIM.

The protein belongs to the complex I subunit 4 family.

It localises to the cellular thylakoid membrane. The enzyme catalyses a plastoquinone + NADH + (n+1) H(+)(in) = a plastoquinol + NAD(+) + n H(+)(out). It carries out the reaction a plastoquinone + NADPH + (n+1) H(+)(in) = a plastoquinol + NADP(+) + n H(+)(out). NDH-1 shuttles electrons from NAD(P)H, via FMN and iron-sulfur (Fe-S) centers, to quinones in the respiratory chain. The immediate electron acceptor for the enzyme in this species is believed to be plastoquinone. Couples the redox reaction to proton translocation (for every two electrons transferred, four hydrogen ions are translocated across the cytoplasmic membrane), and thus conserves the redox energy in a proton gradient. The chain is NAD(P)H-quinone oxidoreductase chain 4 from Prochlorococcus marinus (strain NATL1A).